We begin with the raw amino-acid sequence, 110 residues long: Cytochrome c oxidase subunit 4B (110 aa).

3 helical membrane-spanning segments follow: residues 27 to 47, 50 to 70, and 88 to 108; these read YQVL…LTVA, GVGS…QVIF, and LFLY…VTII.

The protein belongs to the cytochrome c oxidase bacterial subunit 4 family.

It is found in the cell membrane. It carries out the reaction 4 Fe(II)-[cytochrome c] + O2 + 8 H(+)(in) = 4 Fe(III)-[cytochrome c] + 2 H2O + 4 H(+)(out). This is Cytochrome c oxidase subunit 4B (ctaF) from Bacillus subtilis (strain 168).